The following is a 469-amino-acid chain: Coiled-coil domain-containing protein 6 (469 aa).

Acidic residues predominate over residues 1–10 (MADSASESDT). Residues 1–37 (MADSASESDTDAAGGGPAAMQSSCSATSGGSGGGGGG) are disordered. Ala-2 bears the N-acetylalanine mark. Phosphoserine is present on Ser-45. Residues 47 to 320 (FRLEELTNRL…LCRQLSESES (274 aa)) are a coiled coil. Tandem repeats lie at residues 99 to 127 (EQEE…AVNY), 128 to 156 (EKEE…EQHL), and 157 to 185 (EQEQ…QLTL). Residues 99 to 228 (EQEEEFISNT…AEKRILQEKL (130 aa)) form a 5 X 29 AA tandem repeats region. The 4; approximate repeat unit spans residues 186–199 (EQLRREKIDLENTL). Repeat unit 5 spans residues 200-228 (EQEQEALVNRLWKRMDKLEAEKRILQEKL). A phosphoserine mark is found at Ser-233, Ser-237, Ser-242, Ser-247, Ser-277, and Ser-316. Residues 335–362 (AQGLRPRTVSSPIPYTPSPSSSRPISPG) form a disordered region. Residue Thr-342 is modified to Phosphothreonine. Positions 344 to 361 (SSPIPYTPSPSSSRPISP) are enriched in low complexity. 2 positions are modified to phosphoserine: Ser-356 and Ser-360. An Omega-N-methylarginine modification is found at Arg-380. Phosphoserine occurs at positions 388 and 406. The interval 394 to 469 (QHMGASHGIT…QHPVHPSSQP (76 aa)) is disordered. A compositionally biased stretch (pro residues) spans 419–444 (PTPPPSPNTQSPVQPPPPPPPPPMQP). The SH3-binding motif lies at 435-444 (PPPPPPPMQP). The span at 460–469 (QHPVHPSSQP) shows a compositional bias: low complexity.

It is found in the cytoplasm. Its subcellular location is the cytoskeleton. The protein is Coiled-coil domain-containing protein 6 (Ccdc6) of Mus musculus (Mouse).